A 689-amino-acid polypeptide reads, in one-letter code: DNA ligase (689 aa).

NAD(+) is bound by residues 40–44 (DQEYD), 89–90 (SL), and Glu-122. The active-site N6-AMP-lysine intermediate is the Lys-124. The NAD(+) site is built by Arg-145, Glu-182, Lys-300, and Lys-325. Zn(2+) contacts are provided by Cys-419, Cys-422, Cys-437, and Cys-442. The 90-residue stretch at 600–689 (QADGVLTGAT…SADASADASA (90 aa)) folds into the BRCT domain.

This sequence belongs to the NAD-dependent DNA ligase family. LigA subfamily. The cofactor is Mg(2+). It depends on Mn(2+) as a cofactor.

It catalyses the reaction NAD(+) + (deoxyribonucleotide)n-3'-hydroxyl + 5'-phospho-(deoxyribonucleotide)m = (deoxyribonucleotide)n+m + AMP + beta-nicotinamide D-nucleotide.. Functionally, DNA ligase that catalyzes the formation of phosphodiester linkages between 5'-phosphoryl and 3'-hydroxyl groups in double-stranded DNA using NAD as a coenzyme and as the energy source for the reaction. It is essential for DNA replication and repair of damaged DNA. This Gemmatimonas aurantiaca (strain DSM 14586 / JCM 11422 / NBRC 100505 / T-27) protein is DNA ligase.